Consider the following 207-residue polypeptide: Probable molybdenum cofactor guanylyltransferase (207 aa).

GTP-binding positions include 9–11 (LAG), Lys21, and Asp97. Asp97 provides a ligand contact to Mg(2+).

It belongs to the MobA family. Requires Mg(2+) as cofactor.

It localises to the cytoplasm. It catalyses the reaction Mo-molybdopterin + GTP + H(+) = Mo-molybdopterin guanine dinucleotide + diphosphate. Its function is as follows. Transfers a GMP moiety from GTP to Mo-molybdopterin (Mo-MPT) cofactor (Moco or molybdenum cofactor) to form Mo-molybdopterin guanine dinucleotide (Mo-MGD) cofactor. This chain is Probable molybdenum cofactor guanylyltransferase, found in Nostoc sp. (strain PCC 7120 / SAG 25.82 / UTEX 2576).